The primary structure comprises 188 residues: Pyridoxal 5'-phosphate synthase subunit PdxT (188 aa).

46–48 (GES) is an L-glutamine binding site. C78 acts as the Nucleophile in catalysis. Residues R105 and 134–135 (IR) each bind L-glutamine. Active-site charge relay system residues include H170 and E172.

This sequence belongs to the glutaminase PdxT/SNO family. As to quaternary structure, in the presence of PdxS, forms a dodecamer of heterodimers. Only shows activity in the heterodimer.

The enzyme catalyses aldehydo-D-ribose 5-phosphate + D-glyceraldehyde 3-phosphate + L-glutamine = pyridoxal 5'-phosphate + L-glutamate + phosphate + 3 H2O + H(+). It carries out the reaction L-glutamine + H2O = L-glutamate + NH4(+). Its pathway is cofactor biosynthesis; pyridoxal 5'-phosphate biosynthesis. Its function is as follows. Catalyzes the hydrolysis of glutamine to glutamate and ammonia as part of the biosynthesis of pyridoxal 5'-phosphate. The resulting ammonia molecule is channeled to the active site of PdxS. This is Pyridoxal 5'-phosphate synthase subunit PdxT from Moorella thermoacetica (strain ATCC 39073 / JCM 9320).